The primary structure comprises 120 residues: NAD(P)H-quinone oxidoreductase subunit 3, chloroplastic (120 aa).

3 helical membrane-spanning segments follow: residues 9–29, 64–84, and 88–108; these read IFWA…LISG, MFAL…PWAM, and VLGV…IVGS.

It belongs to the complex I subunit 3 family. In terms of assembly, NDH is composed of at least 16 different subunits, 5 of which are encoded in the nucleus.

The protein localises to the plastid. The protein resides in the chloroplast thylakoid membrane. The enzyme catalyses a plastoquinone + NADH + (n+1) H(+)(in) = a plastoquinol + NAD(+) + n H(+)(out). It carries out the reaction a plastoquinone + NADPH + (n+1) H(+)(in) = a plastoquinol + NADP(+) + n H(+)(out). Functionally, NDH shuttles electrons from NAD(P)H:plastoquinone, via FMN and iron-sulfur (Fe-S) centers, to quinones in the photosynthetic chain and possibly in a chloroplast respiratory chain. The immediate electron acceptor for the enzyme in this species is believed to be plastoquinone. Couples the redox reaction to proton translocation, and thus conserves the redox energy in a proton gradient. This Phaseolus vulgaris (Kidney bean) protein is NAD(P)H-quinone oxidoreductase subunit 3, chloroplastic.